The sequence spans 799 residues: Integrin beta-1 (799 aa).

An N-terminal signal peptide occupies residues 1–20 (MNLQLVFWIGLISLICSVFG). Residues 21–729 (QTDKNRCLKA…ETPDCPTGPD (709 aa)) lie on the Extracellular side of the membrane. The region spanning 26–76 (RCLKANAKSCGECIQAGPNCGWCTNTTFLQEGMPTSARCDDLEALKKKGCH) is the PSI domain. 28 disulfide bridges follow: Cys27–Cys45, Cys35–Cys465, Cys38–Cys64, Cys48–Cys75, Cys207–Cys213, Cys261–Cys301, Cys401–Cys415, Cys435–Cys463, Cys467–Cys487, Cys478–Cys490, Cys492–Cys501, Cys503–Cys534, Cys517–Cys532, Cys526–Cys537, Cys539–Cys554, Cys556–Cys577, Cys561–Cys575, Cys569–Cys580, Cys582–Cys591, Cys593–Cys616, Cys600–Cys614, Cys608–Cys619, Cys621–Cys631, Cys634–Cys637, Cys641–Cys692, Cys647–Cys666, Cys650–Cys662, and Cys700–Cys724. 3 N-linked (GlcNAc...) asparagine glycosylation sites follow: Asn50, Asn94, and Asn97. The VWFA domain maps to 140–378 (DYPIDLYYLM…QLIIDAYNSL (239 aa)). Mg(2+) is bound by residues Ser152 and Ser154. Residues Ser154, Asp157, Asp158, and Glu189 each coordinate Ca(2+). A CX3CL1-binding region spans residues 207 to 213 (CTSEQNC). Asn212 carries an N-linked (GlcNAc...) asparagine glycan. Ca(2+)-binding residues include Asn244, Asp246, Pro248, and Glu249. Mg(2+) is bound at residue Glu249. A glycan (N-linked (GlcNAc...) asparagine) is linked at Asn269. A CX3CL1-binding region spans residues 295 to 314 (LPNDGQCHLENNVYTMSHYY). Gly362 contributes to the Ca(2+) binding site. N-linked (GlcNAc...) asparagine glycans are attached at residues Asn363, Asn406, and Asn417. The tract at residues 383-466 (ILENSKLPDG…VVLQFICKCN (84 aa)) is interaction with TMEM182. 4 consecutive I-EGF domains span residues 467–502 (CQSHGIPASPKCHEGNGTFECGACRCNEGRVGRHCE), 503–555 (CSTD…KFCE), 556–592 (CDNFNCDRSNGLICGGNGVCRCRVCECYPNYTGSACD), and 593–632 (CSLDTVPCVATNGQICNGRGICECGACKCTDPKFQGPTCE). Residue Asn482 is glycosylated (N-linked (GlcNAc...) asparagine). Residue Asn521 is glycosylated (N-linked (GlcNAc...) asparagine). N-linked (GlcNAc...) asparagine glycosylation occurs at Asn585. An N-linked (GlcNAc...) asparagine glycan is attached at Asn670. A helical membrane pass occupies residues 730-752 (IIPIVAGVVAGIVLIGLALLLIW). At 753–799 (KLLMIIHDRREFAKFEKEKMNAKWDTGENPIYKSAVTTVVNPKYEGK) the chain is on the cytoplasmic side. Residues 763-768 (EFAKFE) form a signal for sorting from recycling endosomes; interaction with ACAP1 region. At Thr778 the chain carries Phosphothreonine. Tyr784 bears the Phosphotyrosine mark. Ser786 carries the phosphoserine modification. The segment at 786–793 (SAVTTVVN) is interaction with ITGB1BP1. Thr790 carries the phosphothreonine modification. Lys795 is subject to N6-acetyllysine; alternate. Residue Lys795 forms a Glycyl lysine isopeptide (Lys-Gly) (interchain with G-Cter in SUMO1); alternate linkage.

The protein belongs to the integrin beta chain family. As to quaternary structure, interacts with seprase FAP (seprase); the interaction occurs at the cell surface of invadopodia membrane in a collagen-dependent manner. Heterodimer of an alpha and a beta subunit. Beta-1 associates with either alpha-1, alpha-2, alpha-3, alpha-4, alpha-5, alpha-6, alpha-7, alpha-8, alpha-9, alpha-10, alpha-11 or alpha-V. ITGA6:ITGB1 is found in a complex with CD9; interaction takes place in oocytes and is involved in sperm-egg fusion. Binds LGALS3BP and NMRK2, when associated with alpha-7, but not with alpha-5. Interacts with FLNA, FLNB, FLNC and RANBP9. Interacts with KRT1 in the presence of RACK1 and SRC. Interacts with JAML; integrin alpha-4/beta-1 may regulate leukocyte to endothelial cells adhesion by controlling JAML homodimerization. Interacts with RAB21. Interacts (via the cytoplasmic region) with RAB25 (via the hypervariable C-terminal region). Interacts with MYO10. Interacts with ITGB1BP1 (via C-terminal region); the interaction is a prerequisite for focal adhesion disassembly. Interacts with TLN1; the interaction is prevented by competitive binding of ITGB1BP1. Interacts with ACAP1; required for ITGB1 recycling. Interacts with ASAP3. Interacts with FERMT2; the interaction is inhibited in presence of ITGB1BP1. Interacts with DAB2. Interacts with FGR and HCK. Interacts with alpha-7A and alpha-7B in adult skeletal muscle. Interacts with alpha-7B in cardiomyocytes of adult heart. Interacts with EMP2; the interaction may be direct or indirect and ITGB1 has a heterodimer form. ITGA5:ITGB1 interacts with CCN3. ITGA4:ITGB1 is found in a ternary complex with CX3CR1 and CX3CL1. ITGA5:ITGB1 interacts with FBN1. ITGA5:ITGB1 acts as a receptor for fibronectin FN1 and mediates R-G-D-dependent cell adhesion to FN1. ITGA5:ITGB1 interacts with IL1B. Interacts with MDK. ITGA4:ITGB1 interacts with MDK; this interaction mediates MDK-induced osteoblast cells migration through PXN phosphorylation. ITGA6:ITGB1 interacts with MDK; this interaction mediates MDK-induced neurite-outgrowth. ITGA5:ITGB1 interacts with ACE2. Interacts with TMEM182 and LAMB1. Interacts with tensin TNS3; TNS3 also interacts with PEAK1, thus acting as an adapter molecule to bridge the association of PEAK1 with ITGB1. Interacts with tensin TNS4; the interaction displaces tensin TNS3 from the ITGB1 cytoplasmic tail and promotes ITGB1 stability. Integrin ITGA9:ITGB1 interacts with SPP1/OPN (via N-terminus). Integrin ITGA9:ITGB1 interacts with TNC/TNFN3 (via the 3rd Fibronectin type-III domain). Integrins ITGA4:ITGB1 and ITGA9:ITGB1 interact with SVEP1 (via Sushi domain 21); thereby inhibit Ca(2+) intracellular signaling and as a result repress vasocontraction. ITGA4:ITGB1 and ITGA5:ITGB1 interacts with SELP. ITGA5:ITGB1 interacts with IGFBP1. ITGA4:ITGB1 interacts with BCAM. Interacts with ADGRG6.

The protein localises to the cell membrane. It localises to the cell projection. The protein resides in the invadopodium membrane. Its subcellular location is the ruffle membrane. It is found in the recycling endosome. The protein localises to the melanosome. It localises to the lamellipodium. The protein resides in the ruffle. Its subcellular location is the cell junction. It is found in the focal adhesion. Its function is as follows. Integrins alpha-1/beta-1, alpha-2/beta-1, alpha-10/beta-1 and alpha-11/beta-1 are receptors for collagen. Integrins alpha-1/beta-1 and alpha-2/beta-2 recognize the proline-hydroxylated sequence G-F-P-G-E-R in collagen. Integrins alpha-2/beta-1, alpha-3/beta-1, alpha-4/beta-1, alpha-5/beta-1, alpha-8/beta-1, alpha-10/beta-1, alpha-11/beta-1 and alpha-V/beta-1 are receptors for fibronectin. Alpha-4/beta-1 recognizes one or more domains within the alternatively spliced CS-1 and CS-5 regions of fibronectin. Integrin alpha-5/beta-1 is a receptor for fibrinogen. Integrin alpha-1/beta-1, alpha-2/beta-1, alpha-6/beta-1 and alpha-7/beta-1 are receptors for lamimin. Integrin alpha-6/beta-1 (ITGA6:ITGB1) is present in oocytes and is involved in sperm-egg fusion. Integrin alpha-4/beta-1 is a receptor for VCAM1 and recognizes the sequence Q-I-D-S in VCAM1. Integrin alpha-9/beta-1 is a receptor for VCAM1, cytotactin and osteopontin. It recognizes the sequence A-E-I-D-G-I-E-L in cytotactin. Integrin alpha-3/beta-1 is a receptor for epiligrin, thrombospondin and CSPG4. Integrin alpha-3/beta-1 provides a docking site for FAP (seprase) at invadopodia plasma membranes in a collagen-dependent manner and hence may participate in the adhesion, formation of invadopodia and matrix degradation processes, promoting cell invasion. Alpha-3/beta-1 may mediate with LGALS3 the stimulation by CSPG4 of endothelial cells migration. Integrin alpha-V/beta-1 is a receptor for vitronectin. Beta-1 integrins recognize the sequence R-G-D in a wide array of ligands. When associated with alpha-7/beta-1 integrin, regulates cell adhesion and laminin matrix deposition. Involved in promoting endothelial cell motility and angiogenesis. Involved in osteoblast compaction through the fibronectin fibrillogenesis cell-mediated matrix assembly process and the formation of mineralized bone nodules. May be involved in up-regulation of the activity of kinases such as PKC via binding to KRT1. Together with KRT1 and RACK1, serves as a platform for SRC activation or inactivation. Plays a mechanistic adhesive role during telophase, required for the successful completion of cytokinesis. ITGA4:ITGB1 binds to fractalkine (CX3CL1) and may act as its coreceptor in CX3CR1-dependent fractalkine signaling. ITGA4:ITGB1 and ITGA5:ITGB1 bind to PLA2G2A via a site (site 2) which is distinct from the classical ligand-binding site (site 1) and this induces integrin conformational changes and enhanced ligand binding to site 1. ITGA5:ITGB1 acts as a receptor for fibrillin-1 (FBN1) and mediates R-G-D-dependent cell adhesion to FBN1. ITGA5:ITGB1 is a receptor for IL1B and binding is essential for IL1B signaling. ITGA5:ITGB3 is a receptor for soluble CD40LG and is required for CD40/CD40LG signaling. Plays an important role in myoblast differentiation and fusion during skeletal myogenesis. ITGA9:ITGB1 may play a crucial role in SVEP1/polydom-mediated myoblast cell adhesion. Integrins ITGA9:ITGB1 and ITGA4:ITGB1 repress PRKCA-mediated L-type voltage-gated channel Ca(2+) influx and ROCK-mediated calcium sensitivity in vascular smooth muscle cells via their interaction with SVEP1, thereby inhibit vasocontraction. The protein is Integrin beta-1 (Itgb1) of Rattus norvegicus (Rat).